Reading from the N-terminus, the 144-residue chain is Protein MIX23 (144 aa).

A2 is modified (N-acetylalanine). Residues 82-120 (VKSLREEREKNLDDLTLLKRLRKEQTKLKWMQSELNVEE) are a coiled coil. Position 100 is an N6-acetyllysine (K100).

Belongs to the MIX23 family.

This is Protein MIX23 from Mus musculus (Mouse).